We begin with the raw amino-acid sequence, 364 residues long: Anthranilate phosphoribosyltransferase 1 (364 aa).

5-phospho-alpha-D-ribose 1-diphosphate-binding positions include Gly-102, 105 to 106, Thr-110, 112 to 115, 130 to 138, and Ser-142; these read GD, NIST, and KHGNRSASS. Gly-102 lines the anthranilate pocket. Ser-114 serves as a coordination point for Mg(2+). Anthranilate is bound at residue Asn-133. Arg-188 provides a ligand contact to anthranilate. Mg(2+) contacts are provided by Asp-247 and Glu-248.

It belongs to the anthranilate phosphoribosyltransferase family. Homodimer. Mg(2+) is required as a cofactor.

It carries out the reaction N-(5-phospho-beta-D-ribosyl)anthranilate + diphosphate = 5-phospho-alpha-D-ribose 1-diphosphate + anthranilate. Its pathway is amino-acid biosynthesis; L-tryptophan biosynthesis; L-tryptophan from chorismate: step 2/5. Its function is as follows. Catalyzes the transfer of the phosphoribosyl group of 5-phosphorylribose-1-pyrophosphate (PRPP) to anthranilate to yield N-(5'-phosphoribosyl)-anthranilate (PRA). The protein is Anthranilate phosphoribosyltransferase 1 of Nostoc sp. (strain PCC 7120 / SAG 25.82 / UTEX 2576).